The chain runs to 79 residues: Reactive oxygen species modulator 1 (79 aa).

The helical transmembrane segment at 22-44 (GFVMGCAVGMAAGALFGTFSCLR) threads the bilayer. Residues 42-60 (CLRIGMRGRELMGGIGKTM) form a sufficient for antibacterial activity region.

It belongs to the MGR2 family.

It is found in the mitochondrion inner membrane. Its function is as follows. Has antibacterial activity against a variety of bacteria including S.aureus, P.aeruginosa and M.tuberculosis. Acts by inducing bacterial membrane breakage. Functionally, induces production of reactive oxygen species (ROS) which are necessary for cell proliferation. May play a role in inducing oxidative DNA damage and replicative senescence. May play a role in the coordination of mitochondrial morphology and cell proliferation. The polypeptide is Reactive oxygen species modulator 1 (ROMO1) (Bos taurus (Bovine)).